The primary structure comprises 317 residues: Lipase 1 (317 aa).

The N-terminal stretch at 1–18 (MLLKRLCFAALFSLSMVG) is a signal peptide. Residue C19 is the site of N-palmitoyl cysteine attachment. The S-diacylglycerol cysteine moiety is linked to residue C19. One can recognise an AB hydrolase-1 domain in the interval 69–296 (PLLLIHGFGG…MEDVGHVPMV (228 aa)). The active site involves H74. S142 serves as the catalytic Nucleophile. Residues E270 and H292 each act as charge relay system in the active site.

The protein localises to the cell outer membrane. The catalysed reaction is a triacylglycerol + H2O = a diacylglycerol + a fatty acid + H(+). The sequence is that of Lipase 1 (lip1) from Psychrobacter immobilis.